A 1205-amino-acid chain; its full sequence is MGNLKSVGQEPGPPCGLGLGLGLGLCGKQGPASPAPEPSRAPAPATPHAPDHSPAPNSPTLTRPPEGPKFPRVKNWELGSITYDTLCAQSQQDGPCTPRCCLGSLVLPRKLQTRPSPGPPPAEQLLSQARDFINQYYSSIKRSGSQAHEERLQEVEAEVASTGTYHLRESELVFGAKQAWRNAPRCVGRIQWGKLQVFDARDCSSAQEMFTYICNHIKYATNRGNLRSAITVFPQRAPGRGDFRIWNSQLVRYAGYRQQDGSVRGDPANVEITELCIQHGWTPGNGRFDVLPLLLQAPDEAPELFVLPPELVLEVPLEHPTLEWFAALGLRWYALPAVSNMLLEIGGLEFSAAPFSGWYMSTEIGTRNLCDPHRYNILEDVAVCMDLDTRTTSSLWKDKAAVEINLAVLHSFQLAKVTIVDHHAATVSFMKHLDNEQKARGGCPADWAWIVPPISGSLTPVFHQEMVNYILSPAFRYQPDPWKGSATKGAGITRKKTFKEVANAVKISASLMGTLMAKRVKATILYASETGRAQSYAQQLGRLFRKAFDPRVLCMDEYDVVSLEHEALVLVVTSTFGNGDPPENGESFAAALMEMSGPYNSSPRPEQHKSYKIRFNSVSCSDPLVSSWRRKRKESSNTDSAGALGTLRFCVFGLGSRAYPHFCAFARAVDTRLEELGGERLLQLGQGDELCGQEEAFRGWAKAAFQASCETFCVGEEAKAAAQDIFSPKRSWKRQRYRLSTQAEGLQLLPGLIHVHRRKMFQATVLSVENLQSSKSTRATILVRLDTAGQEGLQYQPGDHIGICPPNRPGLVEALLSRVEDPPPPTESVAVEQLEKGSPGGPPPSWVRDPRLPPCTLRQALTFFLDITSPPSPRLLRLLSTLAEEPSEQQELETLSQDPRRYEEWKWFRCPTLLEVLEQFPSVALPAPLLLTQLPLLQPRYYSVSSAPNAHPGEVHLTVAVLAYRTQDGLGPLHYGVCSTWLSQLKTGDPVPCFIRGAPSFRLPPDPYVPCILVGPGTGIAPFRGFWQERLHDIESKGLQPAPMTLVFGCRCSQLDHLYRDEVQDAQERGVFGRVLTAFSREPDSPKTYVQDILRTELAAEVHRVLCLERGHMFVCGDVTMATSVLQTVQRILATEGDMELDEAGDVIGVLRDQQRYHEDIFGLTLRTQEVTSRIRTQSFSLQERHLRGAVPWAFDPPGPDTPGP.

The interval 1–73 is disordered; sequence MGNLKSVGQE…PPEGPKFPRV (73 aa). A lipid anchor (N-myristoyl glycine) is attached at Gly2. 2 S-palmitoyl cysteine lipidation sites follow: Cys15 and Cys26. Residues 15-27 show a composition bias toward gly residues; that stretch reads CGLGLGLGLGLCG. Residues 33-47 show a composition bias toward pro residues; the sequence is SPAPEPSRAPAPATP. Cys96 and Cys101 together coordinate Zn(2+). The interaction with NOSIP stretch occupies residues 100–488; sequence CCLGSLVLPR…PDPWKGSATK (389 aa). Ser104 provides a ligand contact to (6R)-L-erythro-5,6,7,8-tetrahydrobiopterin. Ser116 carries the post-translational modification Phosphoserine; by CDK5. Cys186 is a binding site for heme b. The L-arginine site is built by Gln249, Trp358, Tyr359, Glu363, and Asn368. (6R)-L-erythro-5,6,7,8-tetrahydrobiopterin contacts are provided by Ala448, Trp449, and Phe462. Tyr477 is a heme b binding site. The interval 492-512 is calmodulin-binding; that stretch reads ITRKKTFKEVANAVKISASLM. Thr497 is modified (phosphothreonine; by AMPK and PKA). The Flavodoxin-like domain maps to 522-705; it reads ATILYASETG…AFRGWAKAAF (184 aa). 6 residues coordinate FMN: Ser528, Glu529, Thr530, Arg532, Ser574, and Thr575. Phosphoserine is present on residues Ser617, Ser635, and Ser640. FMN-binding residues include Ser656, Cys663, Glu689, and Gln693. Positions 758-1004 constitute an FAD-binding FR-type domain; that stretch reads RKMFQATVLS…IRGAPSFRLP (247 aa). Arg778 serves as a coordination point for NADP(+). An FAD-binding site is contributed by His800. Residues 820–847 are disordered; that stretch reads EDPPPPTESVAVEQLEKGSPGGPPPSWV. Residue Ser838 is modified to Phosphoserine. Residues Arg940, Tyr942, Ser943, Thr958, Ala960, Tyr964, Val977, Cys978, and Ser979 each contribute to the FAD site. The NADP(+) site is built by Thr1018, Arg1051, Ser1080, Arg1081, Lys1087, Tyr1089, and Gln1091. At Thr1177 the chain carries Phosphothreonine. Ser1179 carries the phosphoserine; by AMPK, PDPK1 and PKA modification. Ser1181 bears the Phosphoserine mark.

This sequence belongs to the NOS family. Homodimer. Interacts with NOSIP and NOSTRIN. Interacts with HSP90AB1. Forms a complex with ASL, ASS1 and SLC7A1; the complex regulates cell-autonomous L-arginine synthesis and citrulline recycling while channeling extracellular L-arginine to nitric oxide synthesis pathway. It depends on heme b as a cofactor. The cofactor is FAD. FMN serves as cofactor. Requires (6R)-L-erythro-5,6,7,8-tetrahydrobiopterin as cofactor. Post-translationally, phosphorylation by AMPK at Ser-1179 in the presence of Ca(2+)-calmodulin (CaM) activates activity. In absence of Ca(2+)-calmodulin, AMPK also phosphorylates Thr-497, resulting in inhibition of activity. Phosphorylation of Ser-116 by CDK5 reduces activity.

Its subcellular location is the cell membrane. The protein localises to the membrane. It is found in the caveola. The protein resides in the cytoplasm. It localises to the cytoskeleton. Its subcellular location is the golgi apparatus. It carries out the reaction 2 L-arginine + 3 NADPH + 4 O2 + H(+) = 2 L-citrulline + 2 nitric oxide + 3 NADP(+) + 4 H2O. Its activity is regulated as follows. Stimulated by calcium/calmodulin. Inhibited by NOSIP and NOSTRIN. Produces nitric oxide (NO) which is implicated in vascular smooth muscle relaxation through a cGMP-mediated signal transduction pathway. NO mediates vascular endothelial growth factor (VEGF)-induced angiogenesis in coronary vessels and promotes blood clotting through the activation of platelets. The chain is Nitric oxide synthase 3 (NOS3) from Bos taurus (Bovine).